A 250-amino-acid polypeptide reads, in one-letter code: tRNA (guanine-N(1)-)-methyltransferase (250 aa).

Residues Gly116 and Ile136–Leu141 each bind S-adenosyl-L-methionine.

The protein belongs to the RNA methyltransferase TrmD family. Homodimer.

The protein localises to the cytoplasm. The catalysed reaction is guanosine(37) in tRNA + S-adenosyl-L-methionine = N(1)-methylguanosine(37) in tRNA + S-adenosyl-L-homocysteine + H(+). In terms of biological role, specifically methylates guanosine-37 in various tRNAs. The sequence is that of tRNA (guanine-N(1)-)-methyltransferase from Pseudomonas syringae pv. tomato (strain ATCC BAA-871 / DC3000).